Here is a 363-residue protein sequence, read N- to C-terminus: UDP-N-acetylglucosamine--N-acetylmuramyl-(pentapeptide) pyrophosphoryl-undecaprenol N-acetylglucosamine transferase (363 aa).

Residues 12–14, Arg-166, Ser-196, and Gln-291 contribute to the UDP-N-acetyl-alpha-D-glucosamine site; that span reads TAG.

Belongs to the glycosyltransferase 28 family. MurG subfamily.

The protein resides in the cell inner membrane. It carries out the reaction di-trans,octa-cis-undecaprenyl diphospho-N-acetyl-alpha-D-muramoyl-L-alanyl-D-glutamyl-meso-2,6-diaminopimeloyl-D-alanyl-D-alanine + UDP-N-acetyl-alpha-D-glucosamine = di-trans,octa-cis-undecaprenyl diphospho-[N-acetyl-alpha-D-glucosaminyl-(1-&gt;4)]-N-acetyl-alpha-D-muramoyl-L-alanyl-D-glutamyl-meso-2,6-diaminopimeloyl-D-alanyl-D-alanine + UDP + H(+). It functions in the pathway cell wall biogenesis; peptidoglycan biosynthesis. Cell wall formation. Catalyzes the transfer of a GlcNAc subunit on undecaprenyl-pyrophosphoryl-MurNAc-pentapeptide (lipid intermediate I) to form undecaprenyl-pyrophosphoryl-MurNAc-(pentapeptide)GlcNAc (lipid intermediate II). This Legionella pneumophila (strain Lens) protein is UDP-N-acetylglucosamine--N-acetylmuramyl-(pentapeptide) pyrophosphoryl-undecaprenol N-acetylglucosamine transferase.